A 256-amino-acid polypeptide reads, in one-letter code: MLTIADKTFSSRLFTGTGKYANSQVMATSIIASGSELVTMALKRVDIDNRDDDILAPLIKAGVNLLPNTSGAKNAKEAIFAAKLAREALGTNWLKLEIHPDPKYLMPDPIETLAAAAELVRQGFIVLPYCHADPVLCKRLEEVGCAAVMPLGAPIGSNKGLASRDFLEIIIDQARVPVIVDAGIGAPSHAAEAMEMGADAVLVNTAIAAAADPIAMGRAFKLAVESGRMAYEAGLAGTINHAIASSPLTAFLDQTA.

Residue K95 is the Schiff-base intermediate with DXP of the active site. 1-deoxy-D-xylulose 5-phosphate-binding positions include G156, 182 to 183, and 204 to 205; these read AG and NT.

This sequence belongs to the ThiG family. Homotetramer. Forms heterodimers with either ThiH or ThiS.

Its subcellular location is the cytoplasm. The enzyme catalyses [ThiS sulfur-carrier protein]-C-terminal-Gly-aminoethanethioate + 2-iminoacetate + 1-deoxy-D-xylulose 5-phosphate = [ThiS sulfur-carrier protein]-C-terminal Gly-Gly + 2-[(2R,5Z)-2-carboxy-4-methylthiazol-5(2H)-ylidene]ethyl phosphate + 2 H2O + H(+). Its pathway is cofactor biosynthesis; thiamine diphosphate biosynthesis. Catalyzes the rearrangement of 1-deoxy-D-xylulose 5-phosphate (DXP) to produce the thiazole phosphate moiety of thiamine. Sulfur is provided by the thiocarboxylate moiety of the carrier protein ThiS. In vitro, sulfur can be provided by H(2)S. The sequence is that of Thiazole synthase from Photobacterium profundum (strain SS9).